The sequence spans 200 residues: Coiled-coil domain-containing protein 28B (200 aa).

Position 1 is an N-acetylmethionine (Met1). Over residues 1-10 (MDDKKKKRSP) the composition is skewed to basic residues. A disordered region spans residues 1–49 (MDDKKKKRSPKPCLAQPAQAPGTLRRVPVPTSHSGSLALGLPHLPSPKQ). Ser46 and Ser115 each carry phosphoserine. Acidic residues predominate over residues 141–152 (EEEDDEEEEDGV). Residues 141–164 (EEEDDEEEEDGVTEGLPEEQKKTM) form a disordered region. Residues 158-183 (EEQKKTMADRNLDQLLSNLEDLSNSI) are a coiled coil.

As to quaternary structure, interacts with BBS1, BBS2, BBS4, BBS5, BBS6, BBS7 and TTC8/BBS8. Interacts with MAPKAP1/SIN1 isoform 1 and RICTOR.

The protein localises to the cytoplasm. The protein resides in the cytoskeleton. It localises to the microtubule organizing center. It is found in the centrosome. In terms of biological role, involved in ciliogenesis. Regulates cilia length through its interaction with MAPKAP1/SIN1 but independently of mTORC2 complex. Modulates mTORC2 complex assembly and function, possibly enhances AKT1 phosphorylation. Does not seem to modulate assembly and function of mTORC1 complex. This Homo sapiens (Human) protein is Coiled-coil domain-containing protein 28B (CCDC28B).